The chain runs to 347 residues: UDP-3-O-acylglucosamine N-acyltransferase (347 aa).

Residue H241 is the Proton acceptor of the active site.

Belongs to the transferase hexapeptide repeat family. LpxD subfamily. In terms of assembly, homotrimer.

The enzyme catalyses a UDP-3-O-[(3R)-3-hydroxyacyl]-alpha-D-glucosamine + a (3R)-hydroxyacyl-[ACP] = a UDP-2-N,3-O-bis[(3R)-3-hydroxyacyl]-alpha-D-glucosamine + holo-[ACP] + H(+). Its pathway is bacterial outer membrane biogenesis; LPS lipid A biosynthesis. Catalyzes the N-acylation of UDP-3-O-acylglucosamine using 3-hydroxyacyl-ACP as the acyl donor. Is involved in the biosynthesis of lipid A, a phosphorylated glycolipid that anchors the lipopolysaccharide to the outer membrane of the cell. The chain is UDP-3-O-acylglucosamine N-acyltransferase from Neisseria meningitidis serogroup A / serotype 4A (strain DSM 15465 / Z2491).